The following is a 154-amino-acid chain: Histone H2B.v3 (154 aa).

Residues 1 to 11 (MVFVKGQKKAT) show a composition bias toward basic residues. The segment at 1–48 (MVFVKGQKKATKGSTQSGEEKTASTTPKVTKTPTEGGEKKRKKRKSDY) is disordered. Residues 12–27 (KGSTQSGEEKTASTTP) are compositionally biased toward polar residues.

This sequence belongs to the histone H2B family. In terms of assembly, the nucleosome is a histone octamer containing two molecules each of H2A, H2B, H3 and H4 assembled in one H3-H4 heterotetramer and two H2A-H2B heterodimers. The octamer wraps approximately 147 bp of DNA.

The protein localises to the nucleus. It localises to the chromosome. Functionally, core component of nucleosome which plays a central role in DNA double strand break (DSB) repair. Nucleosomes wrap and compact DNA into chromatin, limiting DNA accessibility to the cellular machineries which require DNA as a template. Histones thereby play a central role in transcription regulation, DNA repair, DNA replication and chromosomal stability. DNA accessibility is regulated via a complex set of post-translational modifications of histones, also called histone code, and nucleosome remodeling. The sequence is that of Histone H2B.v3 (H2Bv3) from Dictyostelium discoideum (Social amoeba).